A 1228-amino-acid chain; its full sequence is Multimerin-1 (1228 aa).

Residues 1-19 (MKGARLFVLLSSLWSGGIG) form the signal peptide. An N-linked (GlcNAc...) asparagine glycan is attached at N21. Residues 68–98 (TPEARTSEDSLLKSTLPPSETSAPAEGVRNQ) are disordered. Polar residues predominate over residues 79–89 (LKSTLPPSETS). N-linked (GlcNAc...) asparagine glycans are attached at residues N97, N114, and N120. A glycan (N-linked (GlcNAc...) (complex) asparagine) is linked at N136. Positions 157-200 (NTVGGTGGIGGVGGTGGVGNRAPRETYLSRGDSSSSQRTDYQKS) are disordered. Residues 160 to 175 (GGTGGIGGVGGTGGVG) are compositionally biased toward gly residues. Residues 186-188 (RGD) carry the Cell attachment site motif. Polar residues predominate over residues 187–200 (GDSSSSQRTDYQKS). In terms of domain architecture, EMI spans 207 to 282 (GKNWCAYVHT…PGYSGPKCQL (76 aa)). Intrachain disulfides connect C211-C272, C238-C245, and C271-C280. An O-linked (Fuc) threonine glycan is attached at T216. O-linked (Fuc) threonine glycosylation is present at T265. 2 coiled-coil regions span residues 333-365 (MKLTLLQKKIDNISLTVNDVRNTYSSLEGKVSE) and 400-430 (NDMQETVAQLFKTVSSLSEDLESTRQIIQKV). N-linked (GlcNAc...) asparagine glycosylation occurs at N344. N-linked (GlcNAc...) asparagine glycans are attached at residues N431, N507, N541, N576, N618, N680, N729, N783, N816, N828, N840, N921, N933, N942, N981, and N1020. Positions 503–523 (YESLNKTLSKLKEVHEQLLST) form a coiled coil. Coiled-coil stretches lie at residues 580 to 650 (SLEM…EILQ) and 675 to 726 (RKKI…EMED). Positions 819 to 869 (NFQKMYQMFNETTSQVRKYQQNMSHLEEKLLLTTKISKNFETRLQDIESKV) form a coiled coil. One can recognise an EGF-like domain in the interval 1041–1077 (EYSSCSRHPCQNGGTCINGRTSFTCACRHPFTGDNCT). 3 disulfide bridges follow: C1045–C1056, C1050–C1065, and C1067–C1076. Residue T1055 is glycosylated (O-linked (Fuc) threonine). N1075 carries an N-linked (GlcNAc...) asparagine glycan. The 133-residue stretch at 1096-1228 (RYAPMVAFFA…TFSGYLLYRT (133 aa)) folds into the C1q domain.

In terms of assembly, multimeric. Composed of varying sized, disulfide-linked multimers, the smallest of which is a homotrimer. Proteolysis of the promultimerin in the N-terminal region, leads to the mature p155 form that is stored in platelets. Interacts with factor V/Va. Post-translationally, the N-terminus is blocked. Extensively N-glycosylated. In terms of processing, O-fucosylated within the EMI domain (at Thr-216 and Thr-265) by FUT10/POFUT3 and FUT11/POFUT4. O-fucosylation at Thr-216 and Thr-1055 are required for facilitating protein folding and secretion. Synthesized by endothelial cells and megakaryocytes. Stored in platelet alpha granules and endothelial cell Weibel-Palade bodies, following activation of these cells, it is released and attached to megakaryocytes, platelets, endothelium and subendothelium of blood vessels. Not found in plasma. Found in vascular tissues such as placenta, lung, and liver.

It localises to the secreted. In terms of biological role, carrier protein for platelet (but not plasma) factor V/Va. Plays a role in the storage and stabilization of factor V in platelets. Upon release following platelet activation, may limit platelet and plasma factor Va-dependent thrombin generation. Ligand for integrin alpha-IIb/beta-3 and integrin alpha-V/beta-3 on activated platelets, and may function as an extracellular matrix or adhesive protein. This chain is Multimerin-1 (MMRN1), found in Homo sapiens (Human).